We begin with the raw amino-acid sequence, 253 residues long: MSLPDSETLMKTVLEKYPDATDLKEDIDVHMEEFKAFEYRFKLTNVVLRALTLPIPKLEDESEVVFEGRSITYHWTFWTGDDEKKIVSWVNYSPKPIAIQTLKNKSSHRKKDITYSQYIDIKGTVEPGFVVPKNYFVPHPDPDLQPEDAVVHYQILTSMKDSIEDMPHLMSETKLDCEMYIKDRFEELLQEYQESKNTYYLARADFYRKLKFEHLDLDHQLLISAANRDWIDGYFLEKELRASYSLKIDSLAC.

This is an uncharacterized protein from Caenorhabditis elegans.